The primary structure comprises 520 residues: Ubiquitin carboxyl-terminal hydrolase 3 (520 aa).

Met-1 is modified (N-acetylmethionine). The UBP-type zinc finger occupies 1-121 (MECPHLSSSV…QKVREHLQNL (121 aa)). 12 residues coordinate Zn(2+): Cys-3, His-5, Cys-29, Cys-32, Cys-41, Cys-44, Cys-49, His-56, His-60, His-82, Cys-95, and Cys-98. One can recognise a USP domain in the interval 159-511 (TGLRNLGNTC…KAYILFYVEH (353 aa)). Catalysis depends on Cys-168, which acts as the Nucleophile. Catalysis depends on His-471, which acts as the Proton acceptor.

The protein belongs to the peptidase C19 family. USP3 subfamily. Interacts (via UBP-type domain) with H2A; the interaction is less efficient than with monoubiquitinated H2A. Expressed in all tissues examined, with strongest expression in pancreas.

Its subcellular location is the nucleus. The protein resides in the cytoplasm. It carries out the reaction Thiol-dependent hydrolysis of ester, thioester, amide, peptide and isopeptide bonds formed by the C-terminal Gly of ubiquitin (a 76-residue protein attached to proteins as an intracellular targeting signal).. Deubiquitinase that plays a role in several cellular processes including transcriptional regulation, cell cycle progression or innate immunity. In response to DNA damage, deubiquitinates monoubiquitinated target proteins such as histone H2A and H2AX and thereby counteracts RNF168- and RNF8-mediated ubiquitination. In turn, participates in the recruitment of DNA damage repair factors to DNA break sites. Required for proper progression through S phase and subsequent mitotic entry. Acts as a positive regulator of TP53 by deubiquitinating and stabilizing it to promote normal cell proliferation and transformation. Participates in establishing tolerance innate immune memory through non-transcriptional feedback. Mechanistically, negatively regulates TLR-induced NF-kappa-B signaling by targeting and removing the 'Lys-63'-linked polyubiquitin chains on MYD88. Negatively regulates the activation of type I interferon signaling by mediating 'Lys-63'-linked polyubiquitin chains on RIGI and IFIH1. Also deubiquinates ASC/PYCARD, the central adapter mediating the assembly and activation of most inflammasomes, and thereby promotes inflammasome activation. This chain is Ubiquitin carboxyl-terminal hydrolase 3 (USP3), found in Homo sapiens (Human).